Reading from the N-terminus, the 111-residue chain is Dynein light chain Tctex-type (111 aa).

This sequence belongs to the dynein light chain Tctex-type family.

It localises to the cytoplasm. The protein resides in the cytoskeleton. Functionally, acts as a non-catalytic accessory component of a dynein complex. The polypeptide is Dynein light chain Tctex-type (dlcA) (Dictyostelium discoideum (Social amoeba)).